Here is a 110-residue protein sequence, read N- to C-terminus: Transcription factor S (110 aa).

Residues C4, C7, C22, C25, C71, C74, C99, and C102 each coordinate Zn(2+). The C4-type zinc finger occupies 4 to 25 (CPKCGNLMLPDRKRKVWVCRSC). A TFIIS-type zinc finger spans residues 67–107 (TKITCPKCGNDTAYWWEMQTRAGDEPSTIFYKCTKCGHTWR).

The protein belongs to the archaeal RpoM/eukaryotic RPA12/RPB9/RPC11 RNA polymerase family.

Functionally, induces RNA cleavage activity in the RNA polymerase. In its presence, the cleavage activity of the RNA polymerase truncates the RNA back to position +15 in a stepwise manner by releasing mainly dinucleotides from the 3'-end of the nascent RNA. The truncated RNAs are able to continue elongation. Involved in transcriptional proofreading and fidelity. Misincorporation of nucleotides during elongation of transcription leads to arrested elongation complexes which are rescued by TFS-promoted removal of a dinucleotide from the 3'-end. TFS is able to induce a cleavage resynthesis cycle in stalled elongation complexes (resulting from the next missing nucleotide or a reduced incorporation rate of a wrong nucleotide) preventing misincorporation and enabling proofreading in a post-incorporation manner. Pausing of elongation complexes is the main determinant of TFS-induced RNA cleavage. The chain is Transcription factor S from Thermococcus celer.